The chain runs to 522 residues: F-box-like/WD repeat-containing protein TBL1XR1-B (522 aa).

In terms of domain architecture, LisH spans 4–36 (SSDEVNFLVYRYLQESGFSHSAFTFGIESHISQ). Residues 41–86 (GALVPPAALISIIQKGLQYVEAEVSINEDGTLFDGRPIESLSLIDA) enclose the F-box-like domain. Positions 122 to 150 (ATSANNQQPPAKNGESTANGEENGGHALA) are disordered. Residues 123–141 (TSANNQQPPAKNGESTANG) show a composition bias toward polar residues. WD repeat units follow at residues 175–214 (GHESEVFICAWNPVSDLLASGSGDSTARIWNLSENSTSGS), 231–270 (PSNKDVTSLDWNSEGTLLATGSYDGFARIWTKDGNLASTL), 272–311 (QHKGPIFALKWNKKGNFILSAGVDKTTIIWDAHTGEAKQQ), 314–352 (FHSAPALDVDWQSNNTFASCSTDMCIHVCKLGQDRPIKT), 355–394 (GHTNEVNAIKWDPTGNLLASCSDDMTLKIWSMKHDTCVHD), 397–445 (AHNK…CIHT), 448–487 (KHQEPVYSVAFSPDGRYLASGSFDKCVHIWNTQTGALVHS), and 489–522 (RGTGGIFEVCWNAAGDKVGASASDGSVCVLDLRK).

This sequence belongs to the WD repeat EBI family. In terms of assembly, interacts with heterodimers of rxra and thrb, and this interaction is abrogated by thyroid hormone binding to thrb. Interacts with ncor1.

It is found in the nucleus. Functionally, F-box-like protein which acts as an integral component of the N-CoR transcriptional corepressor complex. Probably regulates transcription activation mediated by nuclear receptors. May mediate the recruitment of the 19S proteasome complex, leading to the subsequent proteasomal degradation of the N-CoR complex, thereby allowing cofactor exchange and transcription activation. The protein is F-box-like/WD repeat-containing protein TBL1XR1-B (tbl1xr1-b) of Xenopus laevis (African clawed frog).